Reading from the N-terminus, the 658-residue chain is D-ornithine--citrate ligase (658 aa).

Belongs to the IucA/IucC family.

The catalysed reaction is D-ornithine + citrate + ATP = N(5)-[(S)-citryl]-D-ornithine + AMP + diphosphate + H(+). The protein operates within siderophore biosynthesis. In terms of biological role, involved in the biosynthesis of the siderophore staphyloferrin A. Catalyzes the ATP-dependent condensation of D-ornithine and citrate to form a citryl-D-ornithine intermediate. This is D-ornithine--citrate ligase from Staphylococcus aureus (strain NCTC 8325 / PS 47).